Reading from the N-terminus, the 491-residue chain is NADH-ubiquinone oxidoreductase chain 4 (491 aa).

A run of 14 helical transmembrane segments spans residues 2 to 22 (IFHK…IINV), 37 to 57 (ALEW…AFDM), 89 to 109 (ISLF…LISW), 114 to 134 (FLLK…MGVF), 139 to 159 (LLLF…LIGV), 169 to 189 (ASYY…LGIF), 215 to 235 (WIFA…PFHI), 245 to 265 (PVSG…YGFL), 271 to 291 (ILPA…VIAI), 308 to 328 (IAYS…THTI), 332 to 352 (VAAV…FIAV), 372 to 392 (FSMP…MAIP), 412 to 432 (IVIG…SLYL), and 457 to 477 (IAIS…SLII).

Belongs to the complex I subunit 4 family.

The protein resides in the mitochondrion membrane. The enzyme catalyses a ubiquinone + NADH + 5 H(+)(in) = a ubiquinol + NAD(+) + 4 H(+)(out). Functionally, core subunit of the mitochondrial membrane respiratory chain NADH dehydrogenase (Complex I) that is believed to belong to the minimal assembly required for catalysis. Complex I functions in the transfer of electrons from NADH to the respiratory chain. The immediate electron acceptor for the enzyme is believed to be ubiquinone. The protein is NADH-ubiquinone oxidoreductase chain 4 (ND4) of Metridium senile (Brown sea anemone).